A 179-amino-acid polypeptide reads, in one-letter code: Large ribosomal subunit protein uL5 (179 aa).

The protein belongs to the universal ribosomal protein uL5 family. In terms of assembly, part of the 50S ribosomal subunit; part of the 5S rRNA/L5/L18/L25 subcomplex. Contacts the 5S rRNA and the P site tRNA. Forms a bridge to the 30S subunit in the 70S ribosome.

Functionally, this is one of the proteins that bind and probably mediate the attachment of the 5S RNA into the large ribosomal subunit, where it forms part of the central protuberance. In the 70S ribosome it contacts protein S13 of the 30S subunit (bridge B1b), connecting the 2 subunits; this bridge is implicated in subunit movement. Contacts the P site tRNA; the 5S rRNA and some of its associated proteins might help stabilize positioning of ribosome-bound tRNAs. This is Large ribosomal subunit protein uL5 from Actinobacillus pleuropneumoniae serotype 5b (strain L20).